We begin with the raw amino-acid sequence, 557 residues long: E3 ubiquitin-protein ligase ARIH1 (557 aa).

Positions 1-47 (MDSDEGYNYEFDEDEECSEEDSGAEEEEDEDDDEPDDDTLDLGEVEL) are enriched in acidic residues. Residues 1 to 95 (MDSDEGYNYE…GGGGGPGHEQ (95 aa)) are disordered. The segment covering 65–92 (ETGGGGGSALGPGGGGGGGGGGGGGGPG) has biased composition (gly residues). Residues 105 to 153 (TAEQILQHMVECIREVNEVIQNPATITRILLSHFNWDKEKLMERYFDGN) are UBA-like. K142 is subject to N6-acetyllysine. The tract at residues 182–393 (QDMPCQICYL…SAWYNCNRYN (212 aa)) is TRIAD supradomain. C186, C189, C203, H205, C208, C211, C231, C236, C276, C281, C297, C299, C304, C307, H312, C317, C344, and C347 together coordinate Zn(2+). The segment at 186 to 236 (CQICYLNYPNSYFTGLECGHKFCMQCWSEYLTTKIMEEGMGQTISCPAHGC) adopts an RING-type 1 zinc-finger fold. The IBR-type zinc-finger motif lies at 256 to 317 (LKYQHLITNS…GENWHDPVKC (62 aa)). The segment at 344-375 (CPKCHVTIEKDGGCNHMVCRNQNCKAEFCWVC) adopts an RING-type 2; atypical zinc-finger fold. Residue C357 is part of the active site. Zn(2+) contacts are provided by C362, C367, C372, C375, H382, and C389. Positions 408–557 (RAALQRYLFY…EKDLWEYIED (150 aa)) are ariadne domain.

This sequence belongs to the RBR family. Ariadne subfamily. In terms of assembly, interacts (via the first RING-type zinc finger) with UBE2L3. Associates with cullin-RING ubiquitin ligase (CRL) complexes containing CUL1, CUL2 and CUL3. Interacts with neddylated CUL1. Interacts with neddylated CUL2. Interacts with neddylated CUL3. Interacts with neddylated CUL4A. In terms of tissue distribution, widely expressed.

It is found in the cytoplasm. The protein localises to the nucleus. Its subcellular location is the cajal body. The catalysed reaction is [E2 ubiquitin-conjugating enzyme]-S-ubiquitinyl-L-cysteine + [acceptor protein]-L-lysine = [E2 ubiquitin-conjugating enzyme]-L-cysteine + [acceptor protein]-N(6)-ubiquitinyl-L-lysine.. The protein operates within protein modification; protein ubiquitination. With respect to regulation, autoinhibited by the ariadne domain, which masks the second RING-type zinc finger that contains the active site and inhibits the E3 activity. Inhibition is relieved upon binding to neddylated cullin-RING ubiquitin ligase complexes, which activate the E3 ligase activity of ARIH1. Its function is as follows. E3 ubiquitin-protein ligase, which catalyzes ubiquitination of target proteins together with ubiquitin-conjugating enzyme E2 UBE2L3. Acts as an atypical E3 ubiquitin-protein ligase by working together with cullin-RING ubiquitin ligase (CRL) complexes and initiating ubiquitination of CRL substrates: associates with CRL complexes and specifically mediates addition of the first ubiquitin on CRLs targets. The initial ubiquitin is then elongated by CDC34/UBE2R1 and UBE2R2. E3 ubiquitin-protein ligase activity is activated upon binding to neddylated cullin-RING ubiquitin ligase complexes. Plays a role in protein translation in response to DNA damage by mediating ubiquitination of EIF4E2, the consequences of EIF4E2 ubiquitination are however unclear. According to a report, EIF4E2 ubiquitination leads to promote EIF4E2 cap-binding and protein translation arrest. According to another report EIF4E2 ubiquitination leads to its subsequent degradation. Acts as the ligase involved in ISGylation of EIF4E2. In vitro, controls the degradation of the LINC (LInker of Nucleoskeleton and Cytoskeleton) complex member SUN2 and may therefore have a role in the formation and localization of the LINC complex, and as a consequence, nuclear subcellular localization and nuclear morphology. This Homo sapiens (Human) protein is E3 ubiquitin-protein ligase ARIH1.